We begin with the raw amino-acid sequence, 99 residues long: Aspartyl/glutamyl-tRNA(Asn/Gln) amidotransferase subunit C (99 aa).

It belongs to the GatC family. As to quaternary structure, heterotrimer of A, B and C subunits.

It carries out the reaction L-glutamyl-tRNA(Gln) + L-glutamine + ATP + H2O = L-glutaminyl-tRNA(Gln) + L-glutamate + ADP + phosphate + H(+). It catalyses the reaction L-aspartyl-tRNA(Asn) + L-glutamine + ATP + H2O = L-asparaginyl-tRNA(Asn) + L-glutamate + ADP + phosphate + 2 H(+). In terms of biological role, allows the formation of correctly charged Asn-tRNA(Asn) or Gln-tRNA(Gln) through the transamidation of misacylated Asp-tRNA(Asn) or Glu-tRNA(Gln) in organisms which lack either or both of asparaginyl-tRNA or glutaminyl-tRNA synthetases. The reaction takes place in the presence of glutamine and ATP through an activated phospho-Asp-tRNA(Asn) or phospho-Glu-tRNA(Gln). The sequence is that of Aspartyl/glutamyl-tRNA(Asn/Gln) amidotransferase subunit C from Mycobacterium marinum (strain ATCC BAA-535 / M).